We begin with the raw amino-acid sequence, 65 residues long: MKNFKNFTLEDMKAKRLELKKEYLDLRFKSVVGHVENPLKKREIRRDIARLNTMICEYELGIRKV.

This sequence belongs to the universal ribosomal protein uL29 family.

In Borreliella burgdorferi (strain ATCC 35210 / DSM 4680 / CIP 102532 / B31) (Borrelia burgdorferi), this protein is Large ribosomal subunit protein uL29 (rpmC).